Here is a 315-residue protein sequence, read N- to C-terminus: PDZ domain-containing protein GIPC2 (315 aa).

Over residues 1–12 (MPLKLRGKKKAK) the composition is skewed to basic residues. The interval 1–34 (MPLKLRGKKKAKSKETAGLVEGEPTGAGGGSLSA) is disordered. The region spanning 117–197 (EVNVYKSEDS…EELFTMKLIE (81 aa)) is the PDZ domain.

Belongs to the GIPC family. In terms of assembly, probably interacts with SEMA5A. In terms of tissue distribution, expressed at highest levels in ascending colon and at moderate levels in adult kidney. Expressed at low levels in adult pancreas and at very low levels in adult liver. Expression is down-regulated in several primary tumors, such as kidney, colon and rectal tumors.

Its subcellular location is the cytoplasm. In Homo sapiens (Human), this protein is PDZ domain-containing protein GIPC2 (GIPC2).